A 185-amino-acid polypeptide reads, in one-letter code: TATA-box-binding protein (185 aa).

Repeat copies occupy residues 3–78 and 94–176.

It belongs to the TBP family.

Its function is as follows. General factor that plays a role in the activation of archaeal genes transcribed by RNA polymerase. Binds specifically to the TATA box promoter element which lies close to the position of transcription initiation. The protein is TATA-box-binding protein of Methanopyrus kandleri (strain AV19 / DSM 6324 / JCM 9639 / NBRC 100938).